The primary structure comprises 298 residues: tRNA U34 carboxymethyltransferase (298 aa).

Carboxy-S-adenosyl-L-methionine contacts are provided by residues Lys-69, Trp-83, Lys-88, Gly-107, 129 to 131 (DPS), 156 to 157 (VE), Tyr-176, and Arg-291.

Belongs to the class I-like SAM-binding methyltransferase superfamily. CmoB family. In terms of assembly, homotetramer.

It carries out the reaction carboxy-S-adenosyl-L-methionine + 5-hydroxyuridine(34) in tRNA = 5-carboxymethoxyuridine(34) in tRNA + S-adenosyl-L-homocysteine + H(+). Catalyzes carboxymethyl transfer from carboxy-S-adenosyl-L-methionine (Cx-SAM) to 5-hydroxyuridine (ho5U) to form 5-carboxymethoxyuridine (cmo5U) at position 34 in tRNAs. The protein is tRNA U34 carboxymethyltransferase of Campylobacter curvus (strain 525.92).